The sequence spans 654 residues: MAAATWSWLLAPFLLLHWASAGAGGGAGGSGAGLSGPAVFTSSFLVRFRRGVDNSFAHDVADKYGFDNLGPLVGADGHEYHFKHRTLPHARSRRSLTHTRALKSHPAVHTAVQQPGFKRVKRGLRPAVPAIHGMKFDLKVGEGNRIDEEPTDPYFPMQWYLKNTGQNGGKVRLDLNVQAAWAQGITGKNVTTAIMDDGVDYMHPDLKFNYNAEASYDFSSNDPFPYPRYTDDWFNSHGTRCAGEVAAARDNGICGVGVAYDSKIAGIRMLDQPYMTDLIEANSMGHEPHKIHIYSASWGPTDDGKTVDGPRNATMRAIVQGVNEGRNGLGNIYVWASGDGGEEDDCNCDGYAASMWTISINSAINDGQNAHYDESCSSTLASTFSNGAKDPNTGVATTDLYGKCTTTHSGTSAAAPEAAGVFALALEANPQLTWRDIQHLTVLTSKRNSLFDAKNRFHWTMNGVGLEFNHLFGFGVLDAGAMVTLSKQWHSVPPRYHCEAGELTQPQAIVMGRSLFWEIKTDACKGTDTEVNYLEHVQAVISANASRRGDLELFLTSPMGTKSMILSRRANDDDHRDGFTKWPFMTTHSWGEYPQGTWKLEARFNSPQTRHGNLLEWSLVLHGTKEAPYRTLHPSSPHSKLAIVKKAHEDKKMK.

A signal peptide spans 1–21 (MAAATWSWLLAPFLLLHWASA). Residues 22 to 121 (GAGGGAGGSG…VQQPGFKRVK (100 aa)) constitute a propeptide that is removed on maturation. Positions 158–483 (QWYLKNTGQN…FGVLDAGAMV (326 aa)) constitute a Peptidase S8 domain. An N-linked (GlcNAc...) asparagine glycan is attached at Asn189. Catalysis depends on charge relay system residues Asp196 and His237. 2 disulfide bridges follow: Cys254–Cys404 and Cys346–Cys376. Asn312 carries an N-linked (GlcNAc...) asparagine glycan. Ser412 functions as the Charge relay system in the catalytic mechanism. Residues 491–627 (SVPPRYHCEA…SLVLHGTKEA (137 aa)) form the P/Homo B domain. Cys498 and Cys524 are oxidised to a cystine. Asn544 is a glycosylation site (N-linked (GlcNAc...) asparagine).

The protein belongs to the peptidase S8 family. Furin subfamily. Expressed in the central nervous system (CNS) and midgut endocrine cells of third instar larva (at protein level). In the CNS, expressed in the CA-LP1 and CA-LP2 neurons which innervate the corpus allatum, and in the CC-MS2 neurons which innervate the corpora cardiaca of the ring gland. Also expressed in the CC-MS1, SP3, Tv and Va neurons. Expressed in Akh-producing cells of the corpora cardiaca. In the embryo, restricted to the final stages of embryogenesis where expression is found in anterior sensory structures and in only 168 cells in the brain and ventral nerve cord. After larvae hatch, the sensory structures and most cells in the CNS turn off or substantially reduce expression. In third instar larva, expressed at higher levels in the anterior section than in the posterior section. Little expression is detected in the adult head. In the developing eye, expressed at higher levels in pale-type R7 photoreceptor cells than in yellow-type R7 cells although expression is not seen in all pale-type R7 cells. Also expressed in outer photoreceptor cells.

Its subcellular location is the secreted. The catalysed reaction is Release of protein hormones and neuropeptides from their precursors, generally by hydrolysis of -Lys-Arg-|- bonds.. Serine endopeptidase which is involved in the processing of hormone and other protein precursors at sites comprised of pairs of basic amino acid residues. Required during embryonic and larval development, probably by proteolytically processing peptide hormones involved in hatching, larval growth and larval molting. Required for the processing and activation of Akh which maintains normal hemolymph sugar levels. Has been shown in one study to be required for processing of sli into slit N-product and slit C-product in the embryo which is necessary for lateral transverse muscle elongation but has been shown in another study not to be required for sli cleavage. Required for larval hatching. Also required for normal larval wandering behavior which occurs prior to pupariation. Required during pupal development for head eversion, leg and wing disk extension, and abdominal differentiation. Required during eye development for R8 photoreceptor cell specification by regulating processing of ligands required for the BMP and activin signaling pathways. The protein is Neuroendocrine convertase 2 of Drosophila melanogaster (Fruit fly).